The following is a 254-amino-acid chain: 3-deoxy-manno-octulosonate cytidylyltransferase (254 aa).

This sequence belongs to the KdsB family.

Its subcellular location is the cytoplasm. The catalysed reaction is 3-deoxy-alpha-D-manno-oct-2-ulosonate + CTP = CMP-3-deoxy-beta-D-manno-octulosonate + diphosphate. The protein operates within nucleotide-sugar biosynthesis; CMP-3-deoxy-D-manno-octulosonate biosynthesis; CMP-3-deoxy-D-manno-octulosonate from 3-deoxy-D-manno-octulosonate and CTP: step 1/1. Its pathway is bacterial outer membrane biogenesis; lipopolysaccharide biosynthesis. Functionally, activates KDO (a required 8-carbon sugar) for incorporation into bacterial lipopolysaccharide in Gram-negative bacteria. In Haemophilus influenzae (strain 86-028NP), this protein is 3-deoxy-manno-octulosonate cytidylyltransferase.